Consider the following 175-residue polypeptide: Peptide deformylase (175 aa).

Fe cation contacts are provided by C99 and H141. E142 is a catalytic residue. Fe cation is bound at residue H145.

Belongs to the polypeptide deformylase family. Fe(2+) serves as cofactor.

The enzyme catalyses N-terminal N-formyl-L-methionyl-[peptide] + H2O = N-terminal L-methionyl-[peptide] + formate. Functionally, removes the formyl group from the N-terminal Met of newly synthesized proteins. Requires at least a dipeptide for an efficient rate of reaction. N-terminal L-methionine is a prerequisite for activity but the enzyme has broad specificity at other positions. In Rickettsia canadensis (strain McKiel), this protein is Peptide deformylase.